The sequence spans 222 residues: Dense granule protein 3 (222 aa).

Helical transmembrane passes span 22 to 42 (LIPF…GGLA) and 162 to 182 (IPGY…RKVL). The Prevents secretion from ER motif lies at 219–222 (KKQT).

As to quaternary structure, homodimer. Interacts (via N-terminus) with human host CAMLG (via N-terminus).

The protein localises to the cytoplasm. It localises to the host endoplasmic reticulum. The protein resides in the parasitophorous vacuole membrane. Direct host-parasite interaction occurs at the cytoplasmic faces of the parasitophorous vacuole membrane (PVM) and the host endoplasmic reticulum (ER) membrane via GRA3 and host CAMLG association. Direct insertion of GRA3 ER retrieval motif into the host ER membrane contributes to the host ER recruitment to the PVM. The chain is Dense granule protein 3 from Toxoplasma gondii.